The primary structure comprises 192 residues: Pyridoxal 5'-phosphate synthase subunit PdxT (192 aa).

L-glutamine is bound at residue 46–48 (GES). Cysteine 75 acts as the Nucleophile in catalysis. L-glutamine is bound by residues arginine 101 and 129–130 (IR). Active-site charge relay system residues include histidine 166 and glutamate 168.

Belongs to the glutaminase PdxT/SNO family. In terms of assembly, in the presence of PdxS, forms a dodecamer of heterodimers. Only shows activity in the heterodimer.

It catalyses the reaction aldehydo-D-ribose 5-phosphate + D-glyceraldehyde 3-phosphate + L-glutamine = pyridoxal 5'-phosphate + L-glutamate + phosphate + 3 H2O + H(+). It carries out the reaction L-glutamine + H2O = L-glutamate + NH4(+). It functions in the pathway cofactor biosynthesis; pyridoxal 5'-phosphate biosynthesis. Its function is as follows. Catalyzes the hydrolysis of glutamine to glutamate and ammonia as part of the biosynthesis of pyridoxal 5'-phosphate. The resulting ammonia molecule is channeled to the active site of PdxS. The chain is Pyridoxal 5'-phosphate synthase subunit PdxT from Staphylococcus carnosus (strain TM300).